A 151-amino-acid polypeptide reads, in one-letter code: Globin CTT-IIIA (151 aa).

Positions 8–147 (SMTDAQVAAV…MFHVIFNALD (140 aa)) constitute a Globin domain. His-98 contributes to the heme b binding site.

It belongs to the globin family. As to quaternary structure, monomer.

In Chironomus thummi thummi (Midge), this protein is Globin CTT-IIIA.